A 338-amino-acid polypeptide reads, in one-letter code: NLP effector protein 6 (338 aa).

A signal peptide spans 1–19 (MRFTTIFWISLTVLATVRA). Positions 68 to 119 (LTLSPSASSPAKRNVTLPPDTTMRPDPRQTEPPTEAPTPASTPAPTPDPGPW) are disordered. An N-linked (GlcNAc...) asparagine glycan is attached at Asn81. The span at 101 to 117 (TEAPTPASTPAPTPDPG) shows a compositional bias: pro residues. Positions 205–215 (AIMYSWYFPKD) match the Conserved undecapeptide motif I motif. The Hepta-peptide GHRHDWE motif II motif lies at 222-227 (GHRHDW).

The protein belongs to the Necrosis inducing protein (NPP1) family.

It localises to the secreted. Secreted effector that contributes strongly to virulence during infection by P.capsici. Causes large necrotic areas in both host C.annuum and non-host N.benthamiana. The chain is NLP effector protein 6 from Phytophthora capsici.